A 291-amino-acid polypeptide reads, in one-letter code: 4-hydroxy-tetrahydrodipicolinate synthase (291 aa).

Pyruvate is bound at residue Thr-45. Residue Tyr-133 is the Proton donor/acceptor of the active site. The active-site Schiff-base intermediate with substrate is the Lys-161. Pyruvate is bound at residue Ile-203.

It belongs to the DapA family. Homotetramer; dimer of dimers.

The protein resides in the cytoplasm. It carries out the reaction L-aspartate 4-semialdehyde + pyruvate = (2S,4S)-4-hydroxy-2,3,4,5-tetrahydrodipicolinate + H2O + H(+). The protein operates within amino-acid biosynthesis; L-lysine biosynthesis via DAP pathway; (S)-tetrahydrodipicolinate from L-aspartate: step 3/4. Functionally, catalyzes the condensation of (S)-aspartate-beta-semialdehyde [(S)-ASA] and pyruvate to 4-hydroxy-tetrahydrodipicolinate (HTPA). This chain is 4-hydroxy-tetrahydrodipicolinate synthase, found in Methylococcus capsulatus (strain ATCC 33009 / NCIMB 11132 / Bath).